Here is a 333-residue protein sequence, read N- to C-terminus: Fructose-1,6-bisphosphatase class 1 (333 aa).

Mg(2+) is bound by residues glutamate 89, aspartate 112, leucine 114, and aspartate 115. Substrate-binding positions include 115-118 (DGSS), asparagine 208, tyrosine 241, and lysine 271. Residue glutamate 277 coordinates Mg(2+).

It belongs to the FBPase class 1 family. Homotetramer. Mg(2+) serves as cofactor.

It is found in the cytoplasm. It catalyses the reaction beta-D-fructose 1,6-bisphosphate + H2O = beta-D-fructose 6-phosphate + phosphate. It participates in carbohydrate biosynthesis; gluconeogenesis. This Haemophilus influenzae (strain ATCC 51907 / DSM 11121 / KW20 / Rd) protein is Fructose-1,6-bisphosphatase class 1.